The chain runs to 224 residues: Synaptogyrin-2 (224 aa).

An N-acetylmethionine modification is found at Met1. Phosphoserine is present on Ser3. One can recognise an MARVEL domain in the interval Phe20 to Lys171. The next 4 helical transmembrane spans lie at Val26 to Glu46, Ala73 to Pro93, Val105 to Phe125, and Ala147 to Tyr167. Positions Pro196–Tyr224 are disordered. Residues Thr202–Gly217 are compositionally biased toward polar residues.

The protein belongs to the synaptogyrin family. Post-translationally, may be tyrosine phosphorylated by Src.

It is found in the cytoplasmic vesicle membrane. Its subcellular location is the cytoplasmic vesicle. The protein localises to the secretory vesicle. It localises to the synaptic vesicle membrane. In terms of biological role, may play a role in regulated exocytosis. In neuronal cells, modulates the localization of synaptophysin/SYP into synaptic-like microvesicles and may therefore play a role in the formation and/or the maturation of this vesicles. May also play a role in GLUT4 storage and transport to the plasma membrane. The sequence is that of Synaptogyrin-2 from Bos taurus (Bovine).